Here is a 131-residue protein sequence, read N- to C-terminus: Nitrogenase-stabilizing/protective protein NifW (131 aa).

Belongs to the NifW family. As to quaternary structure, homotrimer; associates with NifD.

Functionally, may protect the nitrogenase Fe-Mo protein from oxidative damage. This Frankia alni (strain DSM 45986 / CECT 9034 / ACN14a) protein is Nitrogenase-stabilizing/protective protein NifW.